A 265-amino-acid polypeptide reads, in one-letter code: Pre-mRNA-splicing factor cwf15 (265 aa).

Disordered regions lie at residues 1–31 and 62–197; these read MTTA…ALPA and AAHF…ALEQ. The segment covering 113–125 has biased composition (acidic residues); sequence EADEDASDSDDSV. Residues 143–155 show a composition bias toward low complexity; sequence SNSQESVDSSNSE. A coiled-coil region spans residues 155 to 205; sequence ESSDEESDSEDETQQLLRELENIKQERKREQMLQEEKNRALEQEKREREIA. Residues 156 to 167 are compositionally biased toward acidic residues; that stretch reads SSDEESDSEDET. The span at 172–197 shows a compositional bias: basic and acidic residues; sequence RELENIKQERKREQMLQEEKNRALEQ.

This sequence belongs to the CWC15 family. Belongs to the 40S cdc5-associated complex (or cwf complex), a spliceosome sub-complex reminiscent of a late-stage spliceosome composed of the U2, U5 and U6 snRNAs and at least brr2, cdc5, cwf2/prp3, cwf3/syf1, cwf4/syf3, cwf5/ecm2, spp42/cwf6, cwf7/spf27, cwf8, cwf9, cwf10, cwf11, cwf12, prp45/cwf13, cwf14, cwf15, cwf16, cwf17, cwf18, cwf19, cwf20, cwf21, cwf22, cwf23, cwf24, cwf25, cwf26, cyp7/cwf27, cwf28, cwf29/ist3, lea1, msl1, prp5/cwf1, prp10, prp12/sap130, prp17, prp22, sap61, sap62, sap114, sap145, slu7, smb1, smd1, smd3, smf1, smg1 and syf2.

The protein localises to the nucleus. Its function is as follows. Involved in pre-mRNA splicing. This Schizosaccharomyces pombe (strain 972 / ATCC 24843) (Fission yeast) protein is Pre-mRNA-splicing factor cwf15 (cwf15).